The primary structure comprises 188 residues: Elongation factor P (188 aa).

At K34 the chain carries N6-(3,6-diaminohexanoyl)-5-hydroxylysine.

It belongs to the elongation factor P family. May be beta-lysylated on the epsilon-amino group of Lys-34 by the combined action of EpmA and EpmB, and then hydroxylated on the C5 position of the same residue by EpmC (if this protein is present). Lysylation is critical for the stimulatory effect of EF-P on peptide-bond formation. The lysylation moiety may extend toward the peptidyltransferase center and stabilize the terminal 3-CCA end of the tRNA. Hydroxylation of the C5 position on Lys-34 may allow additional potential stabilizing hydrogen-bond interactions with the P-tRNA.

The protein localises to the cytoplasm. Its pathway is protein biosynthesis; polypeptide chain elongation. Its function is as follows. Involved in peptide bond synthesis. Alleviates ribosome stalling that occurs when 3 or more consecutive Pro residues or the sequence PPG is present in a protein, possibly by augmenting the peptidyl transferase activity of the ribosome. Modification of Lys-34 is required for alleviation. The sequence is that of Elongation factor P from Xylella fastidiosa (strain M23).